Here is a 129-residue protein sequence, read N- to C-terminus: Small ribosomal subunit protein uS11 (129 aa).

This sequence belongs to the universal ribosomal protein uS11 family. As to quaternary structure, part of the 30S ribosomal subunit. Interacts with proteins S7 and S18. Binds to IF-3.

Its function is as follows. Located on the platform of the 30S subunit, it bridges several disparate RNA helices of the 16S rRNA. Forms part of the Shine-Dalgarno cleft in the 70S ribosome. The sequence is that of Small ribosomal subunit protein uS11 from Methylobacillus flagellatus (strain ATCC 51484 / DSM 6875 / VKM B-1610 / KT).